The following is a 246-amino-acid chain: Probable transcriptional regulatory protein KPK_1906 (246 aa).

This sequence belongs to the TACO1 family.

The protein resides in the cytoplasm. In Klebsiella pneumoniae (strain 342), this protein is Probable transcriptional regulatory protein KPK_1906.